A 379-amino-acid polypeptide reads, in one-letter code: Alanine racemase (379 aa).

The Proton acceptor; specific for D-alanine role is filled by K37. The residue at position 37 (K37) is an N6-(pyridoxal phosphate)lysine. R139 is a substrate binding site. Y266 (proton acceptor; specific for L-alanine) is an active-site residue. M314 provides a ligand contact to substrate.

Belongs to the alanine racemase family. The cofactor is pyridoxal 5'-phosphate.

It catalyses the reaction L-alanine = D-alanine. It participates in amino-acid biosynthesis; D-alanine biosynthesis; D-alanine from L-alanine: step 1/1. Catalyzes the interconversion of L-alanine and D-alanine. May also act on other amino acids. The protein is Alanine racemase (alr) of Sorangium cellulosum (strain So ce56) (Polyangium cellulosum (strain So ce56)).